The following is a 326-amino-acid chain: Large ribosomal subunit protein uL4 (326 aa).

Positions 1–211 (MASCVVKNWQ…EKLKARWGSG (211 aa)) are large ribosomal subunit protein uL4. Disordered stretches follow at residues 44–76 (ARQG…ARAG) and 211–326 (GAAA…EDND). Residues 60-71 (GGRKPWRQKGTG) show a composition bias toward basic residues. A unknown region spans residues 212 to 326 (AAAAAPTQAD…TAAAEEEDND (115 aa)). The span at 221–238 (DRLEDQAQAAEREARPVE) shows a compositional bias: basic and acidic residues. Low complexity-rich tracts occupy residues 252–279 (EAQA…QVQE) and 294–312 (QGQA…PPAG). The span at 313-326 (EEAETAAAEEEDND) shows a compositional bias: acidic residues.

The protein belongs to the universal ribosomal protein uL4 family. Part of the 50S ribosomal subunit.

In terms of biological role, one of the primary rRNA binding proteins, this protein initially binds near the 5'-end of the 23S rRNA. It is important during the early stages of 50S assembly. It makes multiple contacts with different domains of the 23S rRNA in the assembled 50S subunit and ribosome. Functionally, forms part of the polypeptide exit tunnel. This Synechococcus sp. (strain JA-3-3Ab) (Cyanobacteria bacterium Yellowstone A-Prime) protein is Large ribosomal subunit protein uL4.